Here is a 418-residue protein sequence, read N- to C-terminus: Phosphoglycerate kinase (418 aa).

The (2R)-3-phosphoglycerate site is built by Val24, Asp25, Phe26, Asn27, Arg40, Ser63, His64, Gly66, Arg67, Leu122, Arg123, His169, and Arg170. ADP is bound at residue Gly213. Gly213 is a binding site for CDP. The AMP site is built by Ala214 and Lys215. ATP is bound at residue Ala214. Ala214 is a binding site for Mg(2+). Mg(2+) contacts are provided by Ala217 and Asp218. Position 218 (Asp218) interacts with CDP. AMP is bound at residue Lys219. Lys219 lines the ATP pocket. Gly237 lines the ADP pocket. Residue Gly237 coordinates CDP. 2 residues coordinate AMP: Gly238 and Gly312. Residues Gly238 and Gly312 each contribute to the ATP site. Residues Gly337 and Phe342 each contribute to the CDP site. Phe342 lines the ADP pocket. Glu343 contacts AMP. Positions 343, 374, and 375 each coordinate ATP. Asp374 serves as a coordination point for Mg(2+).

Belongs to the phosphoglycerate kinase family. In terms of assembly, monomer. It depends on Mg(2+) as a cofactor.

It carries out the reaction (2R)-3-phosphoglycerate + ATP = (2R)-3-phospho-glyceroyl phosphate + ADP. Its pathway is carbohydrate degradation; glycolysis; pyruvate from D-glyceraldehyde 3-phosphate: step 2/5. The protein is Phosphoglycerate kinase (PGK) of Euplotes crassus.